The following is a 528-amino-acid chain: Capsule biosynthesis protein CapD proenzyme (528 aa).

The signal sequence occupies residues 1–26; the sequence is MNSFKWGKKIILFCLIVSLMGGIGVS. The Nucleophile role is filled by Thr352. Residues Thr352, 429-432, and Arg520 contribute to the poly-gamma-D-glutamate site; that span reads GGNR.

This sequence belongs to the gamma-glutamyltransferase family. This enzyme consists of two polypeptide chains, which are synthesized in precursor form from a single polypeptide. Post-translationally, cleaved by autocatalysis into a large and a small subunit.

Its pathway is capsule biogenesis; capsule polysaccharide biosynthesis. Transpeptidase that cleaves the poly-gamma-D-glutamate capsule and catalyzes the formation of an amide bond with the side-chain amino group of meso-diaminopimelic acid (m-DAP) in the peptidoglycan scaffold. Degradation of the high-molecular weight capsule (H-capsule) to the lower-molecular weight capsule (L-capsule), which is released from the bacterial cell surface. The production of L-capsule is essential to mediate escape from host defenses. The protein is Capsule biosynthesis protein CapD proenzyme (capD) of Bacillus anthracis.